The following is a 422-amino-acid chain: UDP-N-acetylglucosamine 1-carboxyvinyltransferase (422 aa).

22–23 (KN) contacts phosphoenolpyruvate. Arg93 provides a ligand contact to UDP-N-acetyl-alpha-D-glucosamine. The active-site Proton donor is Cys117. Cys117 carries the 2-(S-cysteinyl)pyruvic acid O-phosphothioketal modification. Residues 122 to 126 (RPVDQ), Asp305, and Ile327 contribute to the UDP-N-acetyl-alpha-D-glucosamine site.

Belongs to the EPSP synthase family. MurA subfamily.

The protein resides in the cytoplasm. The enzyme catalyses phosphoenolpyruvate + UDP-N-acetyl-alpha-D-glucosamine = UDP-N-acetyl-3-O-(1-carboxyvinyl)-alpha-D-glucosamine + phosphate. The protein operates within cell wall biogenesis; peptidoglycan biosynthesis. Its function is as follows. Cell wall formation. Adds enolpyruvyl to UDP-N-acetylglucosamine. This Bordetella parapertussis (strain 12822 / ATCC BAA-587 / NCTC 13253) protein is UDP-N-acetylglucosamine 1-carboxyvinyltransferase.